The primary structure comprises 257 residues: UPF0259 membrane protein WIGBR3650 (257 aa).

The next 6 membrane-spanning stretches (helical) occupy residues 23–43 (IIFF…IFLP), 89–109 (LSSL…INTI), 122–142 (IILS…ISFL), 148–168 (ALML…PILI), 190–210 (IKTV…ILVI), and 223–243 (VKIF…IYMY).

This sequence belongs to the UPF0259 family.

It is found in the cell membrane. In Wigglesworthia glossinidia brevipalpis, this protein is UPF0259 membrane protein WIGBR3650.